The primary structure comprises 484 residues: Glycogen synthase (484 aa).

ADP-alpha-D-glucose is bound at residue K15.

Belongs to the glycosyltransferase 1 family. Bacterial/plant glycogen synthase subfamily.

The catalysed reaction is [(1-&gt;4)-alpha-D-glucosyl](n) + ADP-alpha-D-glucose = [(1-&gt;4)-alpha-D-glucosyl](n+1) + ADP + H(+). The protein operates within glycan biosynthesis; glycogen biosynthesis. Functionally, synthesizes alpha-1,4-glucan chains using ADP-glucose. In Geotalea daltonii (strain DSM 22248 / JCM 15807 / FRC-32) (Geobacter daltonii), this protein is Glycogen synthase.